The sequence spans 331 residues: Phosphoribosylformylglycinamidine cyclo-ligase (331 aa).

The protein belongs to the AIR synthase family.

It is found in the cytoplasm. It carries out the reaction 2-formamido-N(1)-(5-O-phospho-beta-D-ribosyl)acetamidine + ATP = 5-amino-1-(5-phospho-beta-D-ribosyl)imidazole + ADP + phosphate + H(+). It functions in the pathway purine metabolism; IMP biosynthesis via de novo pathway; 5-amino-1-(5-phospho-D-ribosyl)imidazole from N(2)-formyl-N(1)-(5-phospho-D-ribosyl)glycinamide: step 2/2. In Clostridium botulinum (strain Langeland / NCTC 10281 / Type F), this protein is Phosphoribosylformylglycinamidine cyclo-ligase.